Here is a 341-residue protein sequence, read N- to C-terminus: D-erythrose-4-phosphate dehydrogenase (341 aa).

14-15 (RI) serves as a coordination point for NAD(+). Residues 156-158 (SCT), Arg202, 215-216 (TR), and Arg238 contribute to the substrate site. Cys157 functions as the Nucleophile in the catalytic mechanism. Asn320 contributes to the NAD(+) binding site.

This sequence belongs to the glyceraldehyde-3-phosphate dehydrogenase family. Epd subfamily. As to quaternary structure, homotetramer.

It localises to the cytoplasm. The catalysed reaction is D-erythrose 4-phosphate + NAD(+) + H2O = 4-phospho-D-erythronate + NADH + 2 H(+). It participates in cofactor biosynthesis; pyridoxine 5'-phosphate biosynthesis; pyridoxine 5'-phosphate from D-erythrose 4-phosphate: step 1/5. In terms of biological role, catalyzes the NAD-dependent conversion of D-erythrose 4-phosphate to 4-phosphoerythronate. The protein is D-erythrose-4-phosphate dehydrogenase of Idiomarina loihiensis (strain ATCC BAA-735 / DSM 15497 / L2-TR).